The chain runs to 506 residues: Anaerobic nitric oxide reductase transcription regulator NorR (506 aa).

D57 carries the 4-aspartylphosphate modification. The Sigma-54 factor interaction domain maps to 187–416 (MIGLSPAMTQ…LEHAIHRAVV (230 aa)). Residues 215 to 222 (GETGTGKE) and 278 to 287 (ADNGTLFLDE) each bind ATP. Positions 481-500 (WAASARALETDVANLHRLAK) form a DNA-binding region, H-T-H motif.

The protein operates within nitrogen metabolism; nitric oxide reduction. Functionally, required for the expression of anaerobic nitric oxide (NO) reductase, acts as a transcriptional activator for at least the norVW operon. Activation also requires sigma-54. This is Anaerobic nitric oxide reductase transcription regulator NorR from Salmonella arizonae (strain ATCC BAA-731 / CDC346-86 / RSK2980).